The chain runs to 352 residues: Cyclin-O (352 aa).

Residues 1–40 are disordered; sequence MVTPCPASPGSPAAGAGRRDSHQNLRAPVKKSRRPCLRRK. The segment covering 28-40 has biased composition (basic residues); the sequence is PVKKSRRPCLRRK. S83 is subject to Phosphoserine.

It belongs to the cyclin family. In terms of tissue distribution, present in respiratory cells (at protein level). Expressed in multiciliated tissue in brain and fallopian tube (at protein level). Highly expressed in oocytes.

The protein resides in the cytoplasm. It is found in the nucleus. The protein localises to the nucleolus. Its function is as follows. Specifically required for generation of multiciliated cells, possibly by promoting a cell cycle state compatible with centriole amplification and maturation. Acts downstream of MCIDAS to promote mother centriole amplification and maturation in preparation for apical docking. May be involved in apoptosis in lymphoid cells; however, this result requires additional evidences in vivo. May be involved in oocyte meiotic resumption in oocytes. This Mus musculus (Mouse) protein is Cyclin-O.